A 162-amino-acid chain; its full sequence is Phosphopantetheine adenylyltransferase (162 aa).

Thr-10 is a substrate binding site. ATP is bound by residues Thr-10–Phe-11 and His-18. Substrate-binding residues include Lys-42, Met-74, and Arg-88. ATP contacts are provided by residues Gly-89–Arg-91, Glu-99, and Tyr-124–Thr-130.

It belongs to the bacterial CoaD family. Homohexamer. The cofactor is Mg(2+).

It is found in the cytoplasm. The enzyme catalyses (R)-4'-phosphopantetheine + ATP + H(+) = 3'-dephospho-CoA + diphosphate. It functions in the pathway cofactor biosynthesis; coenzyme A biosynthesis; CoA from (R)-pantothenate: step 4/5. In terms of biological role, reversibly transfers an adenylyl group from ATP to 4'-phosphopantetheine, yielding dephospho-CoA (dPCoA) and pyrophosphate. The polypeptide is Phosphopantetheine adenylyltransferase (Aliivibrio fischeri (strain ATCC 700601 / ES114) (Vibrio fischeri)).